Consider the following 372-residue polypeptide: DNA/RNA-binding protein ALBA4 (372 aa).

Belongs to the histone-like Alba family. Identified in a TARE6-associated complex consisting of over 30 proteins and including ALBA1, ALBA2 and ALBA4; the complex binds to the non-coding subtelomeric repeat region TARE6.

The protein resides in the nucleus. It is found in the chromosome. It localises to the telomere. The protein localises to the cytoplasm. Possesses DNA- and RNA-binding activities. Binds to DNA fragments longer than 14 base pairs with relaxed sequence specificity. Associates with the subtelomeric TARE6 repeats. Regulates the abundance of transcript sub-populations in a stage-specific manner. Regulates activation of male gametocytes. Participates in the coordination of sporozoite development in the oocyst. The chain is DNA/RNA-binding protein ALBA4 from Plasmodium falciparum (isolate 3D7).